Here is a 723-residue protein sequence, read N- to C-terminus: LIM domain-binding protein 3 (723 aa).

One can recognise a PDZ domain in the interval 1–84 (MSYSVTLTGP…NLSLTLQKSK (84 aa)). Phosphoserine is present on residues S44, S98, and D112. 2 disordered regions span residues 89–134 (ISTT…GALE) and 164–193 (SPVAKASSEGAQGSVSPKVLPGPSQPRQYN). T119 is modified (phosphothreonine). S121 and S123 each carry phosphoserine. S214 bears the Phosphoserine mark. R216 is modified (omega-N-methylarginine). Phosphoserine occurs at positions 220, 251, and 288. 2 disordered regions span residues 280–423 (GTEY…YSPT) and 436–525 (SPAP…PQVT). A291 is subject to Omega-N-methylarginine. The segment covering 309–376 (ATSPLLPASA…AAAASPAPSA (68 aa)) has biased composition (low complexity). The residue at position 327 (I327) is a Phosphoserine. At S330 the chain carries Omega-N-methylarginine. Positions 436–466 (SPAPTYTPSPAPTYSPSPAPAYTPSPAPNYT) are enriched in pro residues. A compositionally biased stretch (polar residues) spans 490-509 (DSFSQKFAPGKSTTTVSKQT). 2 positions are modified to omega-N-methylarginine: R512 and R529. LIM zinc-binding domains lie at 545–603 (PLCG…QFFA), 604–663 (PICA…LFST), and 664–723 (KCHG…AINV).

In terms of assembly, interacts via its LIM domains with various PKC isoforms. Interacts via its PDZ domain with the ACTN2 C-terminal region. Interacts with MYOZ1, MYOZ2 and MYOZ3. In terms of tissue distribution, expressed primarily in adult heart and skeletal muscle, and detected at lower levels in lung. Isoforms are expressed in a tissue-specific manner. Isoform 1, isoform 3 and isoform 5 are expressed in heart, whereas isoform 2, isoform 4 and isoform 6 are expressed in skeletal muscle.

Its subcellular location is the cytoplasm. The protein localises to the perinuclear region. The protein resides in the cell projection. It localises to the pseudopodium. It is found in the cytoskeleton. Its subcellular location is the myofibril. The protein localises to the sarcomere. The protein resides in the z line. May function as an adapter in striated muscle to couple protein kinase C-mediated signaling via its LIM domains to the cytoskeleton. This Mus musculus (Mouse) protein is LIM domain-binding protein 3.